The primary structure comprises 1034 residues: Isoleucine--tRNA ligase (1034 aa).

The short motif at 48–58 (PTANGKPHIGH) is the 'HIGH' region element. Residues 588-592 (KMSKH) carry the 'KMSKS' region motif. Lysine 591 is a binding site for ATP.

The protein belongs to the class-I aminoacyl-tRNA synthetase family. IleS type 2 subfamily. In terms of assembly, monomer. Zn(2+) is required as a cofactor.

The protein localises to the cytoplasm. The enzyme catalyses tRNA(Ile) + L-isoleucine + ATP = L-isoleucyl-tRNA(Ile) + AMP + diphosphate. Functionally, catalyzes the attachment of isoleucine to tRNA(Ile). As IleRS can inadvertently accommodate and process structurally similar amino acids such as valine, to avoid such errors it has two additional distinct tRNA(Ile)-dependent editing activities. One activity is designated as 'pretransfer' editing and involves the hydrolysis of activated Val-AMP. The other activity is designated 'posttransfer' editing and involves deacylation of mischarged Val-tRNA(Ile). In Clostridium kluyveri (strain ATCC 8527 / DSM 555 / NBRC 12016 / NCIMB 10680 / K1), this protein is Isoleucine--tRNA ligase.